A 279-amino-acid chain; its full sequence is Acyl-[acyl-carrier-protein]--UDP-N-acetylglucosamine O-acyltransferase (279 aa).

The protein belongs to the transferase hexapeptide repeat family. LpxA subfamily. As to quaternary structure, homotrimer.

The protein localises to the cytoplasm. The enzyme catalyses a (3R)-hydroxyacyl-[ACP] + UDP-N-acetyl-alpha-D-glucosamine = a UDP-3-O-[(3R)-3-hydroxyacyl]-N-acetyl-alpha-D-glucosamine + holo-[ACP]. It participates in glycolipid biosynthesis; lipid IV(A) biosynthesis; lipid IV(A) from (3R)-3-hydroxytetradecanoyl-[acyl-carrier-protein] and UDP-N-acetyl-alpha-D-glucosamine: step 1/6. In terms of biological role, involved in the biosynthesis of lipid A, a phosphorylated glycolipid that anchors the lipopolysaccharide to the outer membrane of the cell. The polypeptide is Acyl-[acyl-carrier-protein]--UDP-N-acetylglucosamine O-acyltransferase (Chlamydia pneumoniae (Chlamydophila pneumoniae)).